The chain runs to 184 residues: Adenine phosphoribosyltransferase (184 aa).

It belongs to the purine/pyrimidine phosphoribosyltransferase family. As to quaternary structure, homodimer.

The protein localises to the cytoplasm. It carries out the reaction AMP + diphosphate = 5-phospho-alpha-D-ribose 1-diphosphate + adenine. It participates in purine metabolism; AMP biosynthesis via salvage pathway; AMP from adenine: step 1/1. In terms of biological role, catalyzes a salvage reaction resulting in the formation of AMP, that is energically less costly than de novo synthesis. The polypeptide is Adenine phosphoribosyltransferase (Paracidovorax citrulli (strain AAC00-1) (Acidovorax citrulli)).